Reading from the N-terminus, the 229-residue chain is Cytidylate kinase (229 aa).

Gly-12 to Thr-20 serves as a coordination point for ATP.

It belongs to the cytidylate kinase family. Type 1 subfamily.

Its subcellular location is the cytoplasm. It catalyses the reaction CMP + ATP = CDP + ADP. The enzyme catalyses dCMP + ATP = dCDP + ADP. In Pseudomonas aeruginosa (strain UCBPP-PA14), this protein is Cytidylate kinase.